Reading from the N-terminus, the 433-residue chain is C4-dicarboxylate transport protein (433 aa).

Helical transmembrane passes span 8–28 (ILYV…HFWP), 44–64 (LIKM…IAGM), 78–98 (LLYF…AAHL), 148–168 (GDIL…AVLG), 188–208 (IVHV…AFTI), 222–242 (LIGT…GTIA), 307–327 (IYMT…LTLM), and 355–375 (AATL…ILGI).

It belongs to the dicarboxylate/amino acid:cation symporter (DAACS) (TC 2.A.23) family.

It is found in the cell inner membrane. Its function is as follows. Responsible for the transport of dicarboxylates such as succinate, fumarate, and malate from the periplasm across the membrane. The polypeptide is C4-dicarboxylate transport protein (Cupriavidus taiwanensis (strain DSM 17343 / BCRC 17206 / CCUG 44338 / CIP 107171 / LMG 19424 / R1) (Ralstonia taiwanensis (strain LMG 19424))).